A 476-amino-acid chain; its full sequence is Aspartyl/glutamyl-tRNA(Asn/Gln) amidotransferase subunit B (476 aa).

This sequence belongs to the GatB/GatE family. GatB subfamily. As to quaternary structure, heterotrimer of A, B and C subunits.

It catalyses the reaction L-glutamyl-tRNA(Gln) + L-glutamine + ATP + H2O = L-glutaminyl-tRNA(Gln) + L-glutamate + ADP + phosphate + H(+). The enzyme catalyses L-aspartyl-tRNA(Asn) + L-glutamine + ATP + H2O = L-asparaginyl-tRNA(Asn) + L-glutamate + ADP + phosphate + 2 H(+). In terms of biological role, allows the formation of correctly charged Asn-tRNA(Asn) or Gln-tRNA(Gln) through the transamidation of misacylated Asp-tRNA(Asn) or Glu-tRNA(Gln) in organisms which lack either or both of asparaginyl-tRNA or glutaminyl-tRNA synthetases. The reaction takes place in the presence of glutamine and ATP through an activated phospho-Asp-tRNA(Asn) or phospho-Glu-tRNA(Gln). The sequence is that of Aspartyl/glutamyl-tRNA(Asn/Gln) amidotransferase subunit B from Bacillus cytotoxicus (strain DSM 22905 / CIP 110041 / 391-98 / NVH 391-98).